The primary structure comprises 665 residues: F-box/LRR-repeat protein 3 (665 aa).

The F-box domain maps to 11 to 60 (KPFDLLSEELVFIILDLISPNPSDLKSFSLTCKSFYQLESKHRGSLKPLR). 21 LRR repeats span residues 61–81 (SDYL…DLTF), 82–108 (CPRV…DLSR), 109–134 (SGSF…DLSN), 135–159 (ATEM…KLGR), 160–185 (CKML…SLKW), 186–211 (CVGV…DLSY), 214–235 (ITGK…LLEG), 236–261 (CFGV…DASS), 262–287 (CQNL…DLSH), 288–312 (CSSV…IRLD), 313–338 (GCSV…SLSK), 339–364 (CVSV…DITC), 365–390 (CRKL…KMES), 391–416 (CSLV…DLTD), 419–440 (IDDE…KLGI), 441–466 (CLNI…DLYR), 467–492 (SVGI…NISY), 493–517 (CQDI…ESRG), 518–543 (CPNI…DLKK), 544–569 (CPSI…NVSD), and 594–619 (SSGL…KLHA).

This chain is F-box/LRR-repeat protein 3 (FBL3), found in Arabidopsis thaliana (Mouse-ear cress).